Consider the following 444-residue polypeptide: 23S rRNA (uracil(1939)-C(5))-methyltransferase RlmD (444 aa).

One can recognise a TRAM domain in the interval 5–67; it reads RNRFDRTPFQ…RHFDEAKTVE (63 aa). [4Fe-4S] cluster is bound by residues cysteine 80, cysteine 86, cysteine 89, and cysteine 168. S-adenosyl-L-methionine contacts are provided by glutamine 276, phenylalanine 305, asparagine 310, glutamate 326, aspartate 353, and aspartate 374. Cysteine 400 (nucleophile) is an active-site residue.

It belongs to the class I-like SAM-binding methyltransferase superfamily. RNA M5U methyltransferase family. RlmD subfamily.

It catalyses the reaction uridine(1939) in 23S rRNA + S-adenosyl-L-methionine = 5-methyluridine(1939) in 23S rRNA + S-adenosyl-L-homocysteine + H(+). Catalyzes the formation of 5-methyl-uridine at position 1939 (m5U1939) in 23S rRNA. This Xanthomonas campestris pv. campestris (strain 8004) protein is 23S rRNA (uracil(1939)-C(5))-methyltransferase RlmD.